Reading from the N-terminus, the 55-residue chain is Large ribosomal subunit protein bL33 (55 aa).

Positions 1–11 (MAKGARDKIKL) are enriched in basic and acidic residues. Residues 1-24 (MAKGARDKIKLESTAGTGHFYTTT) form a disordered region. Over residues 14 to 24 (TAGTGHFYTTT) the composition is skewed to polar residues.

This sequence belongs to the bacterial ribosomal protein bL33 family.

This Burkholderia multivorans (strain ATCC 17616 / 249) protein is Large ribosomal subunit protein bL33.